We begin with the raw amino-acid sequence, 211 residues long: Pyridoxine/pyridoxamine 5'-phosphate oxidase (211 aa).

Substrate contacts are provided by residues 8–11 (RKNY) and K66. Residues 61 to 66 (RIVLLK), 76 to 77 (FT), K83, and Q105 contribute to the FMN site. Substrate is bound by residues Y123, R127, and S131. FMN is bound by residues 140–141 (QS) and W184. Residue 190–192 (RLH) coordinates substrate. FMN is bound at residue R194.

The protein belongs to the pyridoxamine 5'-phosphate oxidase family. In terms of assembly, homodimer. FMN serves as cofactor.

The enzyme catalyses pyridoxamine 5'-phosphate + O2 + H2O = pyridoxal 5'-phosphate + H2O2 + NH4(+). It carries out the reaction pyridoxine 5'-phosphate + O2 = pyridoxal 5'-phosphate + H2O2. It functions in the pathway cofactor metabolism; pyridoxal 5'-phosphate salvage; pyridoxal 5'-phosphate from pyridoxamine 5'-phosphate: step 1/1. It participates in cofactor metabolism; pyridoxal 5'-phosphate salvage; pyridoxal 5'-phosphate from pyridoxine 5'-phosphate: step 1/1. Functionally, catalyzes the oxidation of either pyridoxine 5'-phosphate (PNP) or pyridoxamine 5'-phosphate (PMP) into pyridoxal 5'-phosphate (PLP). This is Pyridoxine/pyridoxamine 5'-phosphate oxidase from Polynucleobacter asymbioticus (strain DSM 18221 / CIP 109841 / QLW-P1DMWA-1) (Polynucleobacter necessarius subsp. asymbioticus).